Consider the following 449-residue polypeptide: UDP-N-acetylmuramoylalanine--D-glutamate ligase (449 aa).

An ATP-binding site is contributed by 117–123 (GSNGKTT).

This sequence belongs to the MurCDEF family.

The protein localises to the cytoplasm. The enzyme catalyses UDP-N-acetyl-alpha-D-muramoyl-L-alanine + D-glutamate + ATP = UDP-N-acetyl-alpha-D-muramoyl-L-alanyl-D-glutamate + ADP + phosphate + H(+). Its pathway is cell wall biogenesis; peptidoglycan biosynthesis. Its function is as follows. Cell wall formation. Catalyzes the addition of glutamate to the nucleotide precursor UDP-N-acetylmuramoyl-L-alanine (UMA). The sequence is that of UDP-N-acetylmuramoylalanine--D-glutamate ligase from Exiguobacterium sibiricum (strain DSM 17290 / CCUG 55495 / CIP 109462 / JCM 13490 / 255-15).